The sequence spans 110 residues: Insulin (110 aa).

A signal peptide spans 1-24 (MALWMHLLTVLALLALWGPNTGQA). Cystine bridges form between C31/C96, C43/C109, and C95/C100. Positions 57–87 (ELEDPQVEQTELGMGLGAGGLQPLALEMALQ) are cleaved as a propeptide — c peptide.

The protein belongs to the insulin family. As to quaternary structure, heterodimer of a B chain and an A chain linked by two disulfide bonds.

The protein localises to the secreted. Its function is as follows. Insulin decreases blood glucose concentration. It increases cell permeability to monosaccharides, amino acids and fatty acids. It accelerates glycolysis, the pentose phosphate cycle, and glycogen synthesis in liver. The chain is Insulin (INS) from Cavia porcellus (Guinea pig).